A 470-amino-acid polypeptide reads, in one-letter code: 3-isopropylmalate dehydratase large subunit (470 aa).

C349, C409, and C412 together coordinate [4Fe-4S] cluster.

The protein belongs to the aconitase/IPM isomerase family. LeuC type 1 subfamily. As to quaternary structure, heterodimer of LeuC and LeuD. Requires [4Fe-4S] cluster as cofactor.

It catalyses the reaction (2R,3S)-3-isopropylmalate = (2S)-2-isopropylmalate. It participates in amino-acid biosynthesis; L-leucine biosynthesis; L-leucine from 3-methyl-2-oxobutanoate: step 2/4. Its function is as follows. Catalyzes the isomerization between 2-isopropylmalate and 3-isopropylmalate, via the formation of 2-isopropylmaleate. The polypeptide is 3-isopropylmalate dehydratase large subunit (Methylobacterium radiotolerans (strain ATCC 27329 / DSM 1819 / JCM 2831 / NBRC 15690 / NCIMB 10815 / 0-1)).